Consider the following 64-residue polypeptide: DNA-directed RNA polymerase subunit omega (64 aa).

This sequence belongs to the RNA polymerase subunit omega family. In terms of assembly, the RNAP catalytic core consists of 2 alpha, 1 beta, 1 beta' and 1 omega subunit. When a sigma factor is associated with the core the holoenzyme is formed, which can initiate transcription.

It carries out the reaction RNA(n) + a ribonucleoside 5'-triphosphate = RNA(n+1) + diphosphate. Its function is as follows. Promotes RNA polymerase assembly. Latches the N- and C-terminal regions of the beta' subunit thereby facilitating its interaction with the beta and alpha subunits. This is DNA-directed RNA polymerase subunit omega from Oceanobacillus iheyensis (strain DSM 14371 / CIP 107618 / JCM 11309 / KCTC 3954 / HTE831).